Consider the following 312-residue polypeptide: Glyoxylate/hydroxypyruvate reductase A (312 aa).

Residue Arg-227 is part of the active site. The active-site Proton donor is His-275.

This sequence belongs to the D-isomer specific 2-hydroxyacid dehydrogenase family. GhrA subfamily.

It localises to the cytoplasm. It carries out the reaction glycolate + NADP(+) = glyoxylate + NADPH + H(+). It catalyses the reaction (R)-glycerate + NAD(+) = 3-hydroxypyruvate + NADH + H(+). The enzyme catalyses (R)-glycerate + NADP(+) = 3-hydroxypyruvate + NADPH + H(+). In terms of biological role, catalyzes the NADPH-dependent reduction of glyoxylate and hydroxypyruvate into glycolate and glycerate, respectively. This is Glyoxylate/hydroxypyruvate reductase A from Salmonella typhi.